A 92-amino-acid chain; its full sequence is Large ribosomal subunit protein bL25 (92 aa).

The protein belongs to the bacterial ribosomal protein bL25 family. As to quaternary structure, part of the 50S ribosomal subunit; part of the 5S rRNA/L5/L18/L25 subcomplex. Contacts the 5S rRNA. Binds to the 5S rRNA independently of L5 and L18.

This is one of the proteins that binds to the 5S RNA in the ribosome where it forms part of the central protuberance. This chain is Large ribosomal subunit protein bL25, found in Photobacterium profundum (strain SS9).